A 301-amino-acid polypeptide reads, in one-letter code: GLABROUS1 enhancer-binding protein-like 2 (301 aa).

The disordered stretch occupies residues 1-62 (MATPTELGFS…NTKMASPPSN (62 aa)). The span at 44–54 (KKKKKKTKHNT) shows a compositional bias: basic residues. Positions 268–289 (LSNEWKALCVEELKLNINKLRF) are non-canonical leucine-zipper.

It belongs to the GeBP family. Homo- and heterodimers. Interacts with GEBP, GPL1 and GPL3. Expressed in the apical meristem and young leaf primordia. Detected in the vascular tissues of cotyledons and leaves, in hydathodes and in the septun of siliques, but not in roots.

The protein localises to the nucleus. Its function is as follows. Probable transcription factor. May play redundant roles with GEBP and GPL1 in cytokinin responses by regulating the transcript levels of type-A ARR response genes. Involved in stress responses. Plays a repressive role in cell expansion by counteracting the positive role of CPR5 in this process, but does not regulate cell proliferation or endoreduplication. This Arabidopsis thaliana (Mouse-ear cress) protein is GLABROUS1 enhancer-binding protein-like 2.